Reading from the N-terminus, the 330-residue chain is Succinylglutamate desuccinylase (330 aa).

Zn(2+) contacts are provided by histidine 53, glutamate 56, and histidine 147. Glutamate 210 is an active-site residue.

It belongs to the AspA/AstE family. Succinylglutamate desuccinylase subfamily. Zn(2+) is required as a cofactor.

The catalysed reaction is N-succinyl-L-glutamate + H2O = L-glutamate + succinate. The protein operates within amino-acid degradation; L-arginine degradation via AST pathway; L-glutamate and succinate from L-arginine: step 5/5. Transforms N(2)-succinylglutamate into succinate and glutamate. The protein is Succinylglutamate desuccinylase of Yersinia enterocolitica serotype O:8 / biotype 1B (strain NCTC 13174 / 8081).